The sequence spans 535 residues: CTP synthase (535 aa).

The tract at residues 1–267 (MTKYIFVTGG…DQIVCDHLKL (267 aa)) is amidoligase domain. S13 is a binding site for CTP. S13 is a UTP binding site. Residue 14 to 19 (SLGKGI) participates in ATP binding. Y54 is an L-glutamine binding site. ATP is bound at residue D71. Mg(2+) is bound by residues D71 and E141. CTP contacts are provided by residues 148–150 (DIE), 188–193 (KTKPTQ), and K224. UTP contacts are provided by residues 188 to 193 (KTKPTQ) and K224. Position 240 to 242 (240 to 242 (RDA)) interacts with ATP. Positions 292 to 534 (KIALVGKYVE…VRASITNKES (243 aa)) constitute a Glutamine amidotransferase type-1 domain. L-glutamine is bound at residue G354. The Nucleophile; for glutamine hydrolysis role is filled by C381. Residues 382-385 (LGMQ), E405, and R462 contribute to the L-glutamine site. Catalysis depends on residues H507 and E509.

Belongs to the CTP synthase family. Homotetramer.

The enzyme catalyses UTP + L-glutamine + ATP + H2O = CTP + L-glutamate + ADP + phosphate + 2 H(+). It catalyses the reaction L-glutamine + H2O = L-glutamate + NH4(+). The catalysed reaction is UTP + NH4(+) + ATP = CTP + ADP + phosphate + 2 H(+). The protein operates within pyrimidine metabolism; CTP biosynthesis via de novo pathway; CTP from UDP: step 2/2. Allosterically activated by GTP, when glutamine is the substrate; GTP has no effect on the reaction when ammonia is the substrate. The allosteric effector GTP functions by stabilizing the protein conformation that binds the tetrahedral intermediate(s) formed during glutamine hydrolysis. Inhibited by the product CTP, via allosteric rather than competitive inhibition. Catalyzes the ATP-dependent amination of UTP to CTP with either L-glutamine or ammonia as the source of nitrogen. Regulates intracellular CTP levels through interactions with the four ribonucleotide triphosphates. This is CTP synthase from Bacillus cereus (strain AH820).